The sequence spans 228 residues: Ribonuclease 3 (228 aa).

Positions 3–132 (IRPLEEHLGI…FLGALYLDQG (130 aa)) constitute an RNase III domain. A Mg(2+)-binding site is contributed by Glu-45. Asp-49 is a catalytic residue. Mg(2+) is bound by residues Asp-118 and Glu-121. Glu-121 is a catalytic residue. Positions 158-227 (DYKSQLQEFV…AKNALDSINN (70 aa)) constitute a DRBM domain. Positions 205–228 (GTGRTKKEAEQRAAKNALDSINNS) are disordered.

It belongs to the ribonuclease III family. In terms of assembly, homodimer. The cofactor is Mg(2+).

The protein resides in the cytoplasm. It carries out the reaction Endonucleolytic cleavage to 5'-phosphomonoester.. Functionally, digests double-stranded RNA. Involved in the processing of primary rRNA transcript to yield the immediate precursors to the large and small rRNAs (23S and 16S). Processes some mRNAs, and tRNAs when they are encoded in the rRNA operon. Processes pre-crRNA and tracrRNA of type II CRISPR loci if present in the organism. The protein is Ribonuclease 3 of Oceanobacillus iheyensis (strain DSM 14371 / CIP 107618 / JCM 11309 / KCTC 3954 / HTE831).